A 983-amino-acid polypeptide reads, in one-letter code: Inner tegument protein (983 aa).

Residues 474–983 are interaction with large tegument protein; it reads LNVNTHFAVQ…TSVSLPPASP (510 aa). A disordered region spans residues 902–932; it reads PWESAPQPPRLRMTPDTDHEESTAGATSVPE. Basic and acidic residues predominate over residues 914 to 923; that stretch reads MTPDTDHEES.

The protein belongs to the herpesviridae inner tegument protein family. As to quaternary structure, interacts (via C-terminus) with the large tegument protein/LTP (via N-terminus).

The protein resides in the virion tegument. It is found in the host cytoplasm. It localises to the host nucleus. Its subcellular location is the host Golgi apparatus. The protein localises to the host trans-Golgi network. Its function is as follows. Plays an essential role in cytoplasmic secondary envelopment during viral egress. Interacts with the capsid via the large tegument protein/LTP and participates in its transport to the host trans-Golgi network (TGN) where secondary envelopment occurs. Modulates tegumentation and capsid accumulation at the viral assembly complex. This Homo sapiens (Human) protein is Inner tegument protein (UL47).